Here is a 465-residue protein sequence, read N- to C-terminus: UDP-N-acetylmuramate--L-alanine ligase (465 aa).

Residue 112-118 coordinates ATP; sequence GTHGKTT.

This sequence belongs to the MurCDEF family.

The protein localises to the cytoplasm. The enzyme catalyses UDP-N-acetyl-alpha-D-muramate + L-alanine + ATP = UDP-N-acetyl-alpha-D-muramoyl-L-alanine + ADP + phosphate + H(+). The protein operates within cell wall biogenesis; peptidoglycan biosynthesis. Cell wall formation. This Burkholderia cenocepacia (strain HI2424) protein is UDP-N-acetylmuramate--L-alanine ligase.